A 203-amino-acid chain; its full sequence is ATP-dependent Clp protease proteolytic subunit 1 (203 aa).

Serine 101 serves as the catalytic Nucleophile. Residue histidine 126 is part of the active site.

Belongs to the peptidase S14 family. Fourteen ClpP subunits assemble into 2 heptameric rings which stack back to back to give a disk-like structure with a central cavity, resembling the structure of eukaryotic proteasomes.

The protein localises to the cytoplasm. It carries out the reaction Hydrolysis of proteins to small peptides in the presence of ATP and magnesium. alpha-casein is the usual test substrate. In the absence of ATP, only oligopeptides shorter than five residues are hydrolyzed (such as succinyl-Leu-Tyr-|-NHMec, and Leu-Tyr-Leu-|-Tyr-Trp, in which cleavage of the -Tyr-|-Leu- and -Tyr-|-Trp bonds also occurs).. In terms of biological role, cleaves peptides in various proteins in a process that requires ATP hydrolysis. Has a chymotrypsin-like activity. Plays a major role in the degradation of misfolded proteins. The chain is ATP-dependent Clp protease proteolytic subunit 1 from Synechococcus sp. (strain JA-2-3B'a(2-13)) (Cyanobacteria bacterium Yellowstone B-Prime).